Consider the following 429-residue polypeptide: Glutamate-1-semialdehyde 2,1-aminomutase 2 (429 aa).

Lys-268 is modified (N6-(pyridoxal phosphate)lysine).

Belongs to the class-III pyridoxal-phosphate-dependent aminotransferase family. HemL subfamily. As to quaternary structure, homodimer. It depends on pyridoxal 5'-phosphate as a cofactor.

Its subcellular location is the cytoplasm. The catalysed reaction is (S)-4-amino-5-oxopentanoate = 5-aminolevulinate. Its pathway is porphyrin-containing compound metabolism; protoporphyrin-IX biosynthesis; 5-aminolevulinate from L-glutamyl-tRNA(Glu): step 2/2. The polypeptide is Glutamate-1-semialdehyde 2,1-aminomutase 2 (Staphylococcus carnosus (strain TM300)).